The following is a 609-amino-acid chain: Serine/threonine-protein phosphatase 4 regulatory subunit 2 (609 aa).

Ser-68 is modified (phosphoserine). The segment at 175–569 (NNNGNADEGS…EEARVSPSAT (395 aa)) is disordered. Residues 183-194 (GSSPGAGSAGCA) are compositionally biased toward low complexity. Over residues 201-225 (RSDDNDQPKAKKAKLEIDGEERSEA) the composition is skewed to basic and acidic residues. 2 positions are modified to phosphoserine: Ser-223 and Ser-226. Positions 233–244 (VATRVKNEKDEK) are enriched in basic and acidic residues. Ser-252 bears the Phosphoserine mark. Residues 258–270 (EIEEPDEEVDEAD) show a composition bias toward acidic residues. Composition is skewed to basic and acidic residues over residues 310–351 (IEAE…KPDG) and 375–400 (EPVKVKAENEKEEKKHAPIKTEKQDD). Residues 401–410 (IDSTETDDAP) are compositionally biased toward acidic residues. Residues 414-462 (KPAEEKIASSESKPKTKSEDDPEAETKKSQPEKTETEAAEKSVSDEKQA) are compositionally biased toward basic and acidic residues. Thr-602 is modified (phosphothreonine). Phosphoserine is present on Ser-603.

This sequence belongs to the PPP4R2 family. Serine/threonine-protein phosphatase 4 (PP4) occurs in different assemblies of the catalytic and one or more regulatory subunits. Probably part of a PP4 PPP4C-PPP4R2-PPP4R3 complex containing Pp4-19C, PPP4R2r and flfl.

Regulatory subunit of serine/threonine-protein phosphatase 4 (PP4). The probable PP4 complex Pp4-19C-PPP4R2r-flfl (PPP4C-PPP4R2-PPP4R3) is required to prevent caspase induced cell death (in vitro). The chain is Serine/threonine-protein phosphatase 4 regulatory subunit 2 (PPP4R2r) from Drosophila melanogaster (Fruit fly).